Reading from the N-terminus, the 243-residue chain is Endochitinase (243 aa).

Intrachain disulfides connect Cys23-Cys85, Cys97-Cys105, and Cys223-Cys236. Glu67 serves as the catalytic Proton donor.

Its subcellular location is the vacuole. The enzyme catalyses Random endo-hydrolysis of N-acetyl-beta-D-glucosaminide (1-&gt;4)-beta-linkages in chitin and chitodextrins.. Functionally, defense against chitin-containing fungal pathogens. Shows activity on chitin, tetra-N-acetylglucosamine and chitosan. The sequence is that of Endochitinase from Carica papaya (Papaya).